Here is a 420-residue protein sequence, read N- to C-terminus: Glucose-1-phosphate adenylyltransferase (420 aa).

Residues Tyr107, Gly172, 187 to 188, and Ser205 contribute to the alpha-D-glucose 1-phosphate site; that span reads EK.

This sequence belongs to the bacterial/plant glucose-1-phosphate adenylyltransferase family. In terms of assembly, homotetramer.

It carries out the reaction alpha-D-glucose 1-phosphate + ATP + H(+) = ADP-alpha-D-glucose + diphosphate. The protein operates within glycan biosynthesis; glycogen biosynthesis. Its function is as follows. Involved in the biosynthesis of ADP-glucose, a building block required for the elongation reactions to produce glycogen. Catalyzes the reaction between ATP and alpha-D-glucose 1-phosphate (G1P) to produce pyrophosphate and ADP-Glc. This Rhodopseudomonas palustris (strain HaA2) protein is Glucose-1-phosphate adenylyltransferase.